The sequence spans 188 residues: NADH-quinone oxidoreductase subunit I (188 aa).

4Fe-4S ferredoxin-type domains lie at 44 to 74 (LNRYADGLEKCIGCELCAWACPADAIFVEGA) and 90 to 119 (RVYQINYLRCIGCGLCIEACPTRALTMTNE). C54, C57, C60, C64, C99, C102, C105, and C109 together coordinate [4Fe-4S] cluster. Residues 144–188 (GMVDSPHPMAPGTTAEDYYRGTVTGGAAPASQDEPEADDTAGDRP) are disordered. The span at 176 to 188 (DEPEADDTAGDRP) shows a compositional bias: acidic residues.

This sequence belongs to the complex I 23 kDa subunit family. NDH-1 is composed of 14 different subunits. Subunits NuoA, H, J, K, L, M, N constitute the membrane sector of the complex. [4Fe-4S] cluster serves as cofactor.

It is found in the cell membrane. It carries out the reaction a quinone + NADH + 5 H(+)(in) = a quinol + NAD(+) + 4 H(+)(out). In terms of biological role, NDH-1 shuttles electrons from NADH, via FMN and iron-sulfur (Fe-S) centers, to quinones in the respiratory chain. The immediate electron acceptor for the enzyme in this species is believed to be ubiquinone. Couples the redox reaction to proton translocation (for every two electrons transferred, four hydrogen ions are translocated across the cytoplasmic membrane), and thus conserves the redox energy in a proton gradient. This Rhodococcus opacus (strain B4) protein is NADH-quinone oxidoreductase subunit I.